Reading from the N-terminus, the 205-residue chain is Probable GTP-binding protein EngB (205 aa).

Residues 29–203 (QGAEIAFIGR…KAVLSQWFSS (175 aa)) form the EngB-type G domain. GTP-binding positions include 37 to 44 (GRSNAGKS), 64 to 68 (GRTQM), 82 to 85 (DLPG), 149 to 152 (TKSD), and 182 to 184 (FSS). 2 residues coordinate Mg(2+): Ser44 and Thr66.

Belongs to the TRAFAC class TrmE-Era-EngA-EngB-Septin-like GTPase superfamily. EngB GTPase family. The cofactor is Mg(2+).

Its function is as follows. Necessary for normal cell division and for the maintenance of normal septation. The polypeptide is Probable GTP-binding protein EngB (Coxiella burnetii (strain CbuK_Q154) (Coxiella burnetii (strain Q154))).